The following is a 1001-amino-acid chain: 26S proteasome non-ATPase regulatory subunit 1 homolog B (1001 aa).

Alanine 2 carries the post-translational modification N-acetylalanine. Lysine 166 is covalently cross-linked (Glycyl lysine isopeptide (Lys-Gly) (interchain with G-Cter in ubiquitin)). PC repeat units follow at residues 412–447 (SATAGLGVIHRGHLQQGRSLMAPYLPQGGAGGGGSP), 452–485 (GALYALGLIHANHGEGIKQFLRDSLRSTSVEVIQ), 487–521 (GACLGLGLAALGTADEDIYDDIKSVLYTDSAVAGE), 522–555 (AAGISMGLLLVGTATDKASEMLAYAHETQHEKII), 557–590 (GLALGIALTVYGREEGADTLIEQMTRDQDPIIRY), 591–626 (GGMYALALAYSGTANNKAIRQLLHFAVSDVSDDVRR), 627–659 (TAVLALGFVLYSDPEQTPRIVSLLSESYNPHVR), 661–695 (GAALAVGISCAGTGLSEAISLLEPLTSDVVDFVRQ), 696–736 (GALI…DTMS), and 739–771 (GAILASGILDAGGRNVTIRLLSKTKHDKVTAVI). 2 disordered regions span residues 853 to 896 (AKKE…TVEK) and 954 to 1001 (SLTD…YASP). Positions 854 to 863 (KKEAEQKAKA) are enriched in basic and acidic residues. A Phosphoserine modification is found at serine 889. A compositionally biased stretch (low complexity) spans 961-985 (STASPAVGAEAAGQAQQAATTSAMA).

Belongs to the proteasome subunit S1 family. In terms of assembly, component of the 19S regulatory particle (RP/PA700) base subcomplex of the 26S proteasome. The 26S proteasome is composed of a core protease (CP), known as the 20S proteasome, capped at one or both ends by the 19S regulatory particle (RP/PA700). The RP/PA700 complex is composed of at least 17 different subunits in two subcomplexes, the base and the lid, which form the portions proximal and distal to the 20S proteolytic core, respectively.

Its function is as follows. Acts as a regulatory subunit of the 26 proteasome which is involved in the ATP-dependent degradation of ubiquitinated proteins. This Arabidopsis thaliana (Mouse-ear cress) protein is 26S proteasome non-ATPase regulatory subunit 1 homolog B (RPN2B).